We begin with the raw amino-acid sequence, 232 residues long: Ashwin (232 aa).

Serine 112, serine 182, serine 184, serine 189, and serine 193 each carry phosphoserine. Residues 163–232 (KMEHNNNDTQ…KRKIQHVTWP (70 aa)) form a disordered region. Phosphothreonine is present on residues threonine 197 and threonine 198. Over residues 206-224 (APKEEAEATNHLKPPEVKR) the composition is skewed to basic and acidic residues.

It belongs to the ashwin family. As to quaternary structure, component of the tRNA-splicing ligase complex.

It is found in the nucleus. This Mus musculus (Mouse) protein is Ashwin.